Reading from the N-terminus, the 875-residue chain is Kelch-like protein 29 (875 aa).

Polar residues predominate over residues 113–126 (IRWGQTPVNQSTPW). Disordered regions lie at residues 113 to 145 (IRWG…PGTG) and 240 to 291 (GVGQ…DSAH). A compositionally biased stretch (basic and acidic residues) spans 131 to 140 (PPSKQMRESD). Residues 270–280 (PSAALPSSVPA) show a composition bias toward low complexity. The region spanning 329 to 401 (TDLKIVVEGR…VYTGSLVIDS (73 aa)) is the BTB domain. Kelch repeat units follow at residues 585-635 (VIVL…VSAG), 637-683 (NIYL…VYDG), 684-730 (KIYT…VCGG), 732-778 (IYVF…TLNG), 779-821 (FVFI…VLDG), and 822-870 (KIYA…VIKK).

The chain is Kelch-like protein 29 (Klhl29) from Mus musculus (Mouse).